The chain runs to 230 residues: ATP-dependent dethiobiotin synthetase BioD (230 aa).

12–17 (DIGKTH) is a binding site for ATP. Thr-16 provides a ligand contact to Mg(2+). The active site involves Lys-37. Ser-41 contacts substrate. ATP contacts are provided by residues Asp-52, 115–118 (EGAG), and 175–176 (SE). The Mg(2+) site is built by Asp-52 and Glu-115.

Belongs to the dethiobiotin synthetase family. In terms of assembly, homodimer. Mg(2+) serves as cofactor.

Its subcellular location is the cytoplasm. It catalyses the reaction (7R,8S)-7,8-diammoniononanoate + CO2 + ATP = (4R,5S)-dethiobiotin + ADP + phosphate + 3 H(+). It participates in cofactor biosynthesis; biotin biosynthesis; biotin from 7,8-diaminononanoate: step 1/2. Functionally, catalyzes a mechanistically unusual reaction, the ATP-dependent insertion of CO2 between the N7 and N8 nitrogen atoms of 7,8-diaminopelargonic acid (DAPA, also called 7,8-diammoniononanoate) to form a ureido ring. The chain is ATP-dependent dethiobiotin synthetase BioD from Caulobacter sp. (strain K31).